The primary structure comprises 160 residues: MGVSKKPDLNDPVLRAKLAKGMGHNYYGEPAWPNDLLYIFPVVILGTIACNVGLAVLEPSMIGEPADPFATPLEILPEWYFFPVFQILRTVPNKLLGVLLMVSVPTGLLTVPFLENVNKFQNPFRRPVATTVFLIGTAVALWLGIGATLPIEKSLTLGLF.

Transmembrane regions (helical) follow at residues 36–56 (LLYI…GLAV), 95–115 (LLGV…PFLE), and 131–151 (TVFL…TLPI).

Belongs to the cytochrome b family. PetD subfamily. As to quaternary structure, the 4 large subunits of the cytochrome b6-f complex are cytochrome b6, subunit IV (17 kDa polypeptide, petD), cytochrome f and the Rieske protein, while the 4 small subunits are petG, petL, petM and petN. The complex functions as a dimer.

The protein resides in the plastid. Its subcellular location is the chloroplast thylakoid membrane. Component of the cytochrome b6-f complex, which mediates electron transfer between photosystem II (PSII) and photosystem I (PSI), cyclic electron flow around PSI, and state transitions. The chain is Cytochrome b6-f complex subunit 4 from Oryza nivara (Indian wild rice).